Reading from the N-terminus, the 288-residue chain is Acetyl-coenzyme A carboxylase carboxyl transferase subunit beta (288 aa).

In terms of domain architecture, CoA carboxyltransferase N-terminal spans 34 to 288 (LFAKCPACKH…HLVAFHGGGQ (255 aa)). Positions 38, 41, 56, and 59 each coordinate Zn(2+). The segment at 38-59 (CPACKHMIYKKDLGLAKICPTC) adopts a C4-type zinc-finger fold.

The protein belongs to the AccD/PCCB family. Acetyl-CoA carboxylase is a heterohexamer composed of biotin carboxyl carrier protein (AccB), biotin carboxylase (AccC) and two subunits each of ACCase subunit alpha (AccA) and ACCase subunit beta (AccD). Requires Zn(2+) as cofactor.

The protein resides in the cytoplasm. The enzyme catalyses N(6)-carboxybiotinyl-L-lysyl-[protein] + acetyl-CoA = N(6)-biotinyl-L-lysyl-[protein] + malonyl-CoA. The protein operates within lipid metabolism; malonyl-CoA biosynthesis; malonyl-CoA from acetyl-CoA: step 1/1. In terms of biological role, component of the acetyl coenzyme A carboxylase (ACC) complex. Biotin carboxylase (BC) catalyzes the carboxylation of biotin on its carrier protein (BCCP) and then the CO(2) group is transferred by the transcarboxylase to acetyl-CoA to form malonyl-CoA. The protein is Acetyl-coenzyme A carboxylase carboxyl transferase subunit beta of Streptococcus pyogenes serotype M28 (strain MGAS6180).